A 393-amino-acid polypeptide reads, in one-letter code: Acetate kinase (393 aa).

Asparagine 7 serves as a coordination point for Mg(2+). ATP is bound at residue lysine 14. Arginine 89 is a binding site for substrate. The active-site Proton donor/acceptor is the aspartate 146. ATP-binding positions include 204-208 (HIGNG), 279-281 (DSR), and 327-331 (GIGEN). Mg(2+) is bound at residue glutamate 379.

Belongs to the acetokinase family. Homodimer. It depends on Mg(2+) as a cofactor. Mn(2+) serves as cofactor.

It is found in the cytoplasm. The catalysed reaction is acetate + ATP = acetyl phosphate + ADP. It participates in metabolic intermediate biosynthesis; acetyl-CoA biosynthesis; acetyl-CoA from acetate: step 1/2. Functionally, catalyzes the formation of acetyl phosphate from acetate and ATP. Can also catalyze the reverse reaction. The protein is Acetate kinase of Acholeplasma laidlawii (strain PG-8A).